Consider the following 377-residue polypeptide: Cilia- and flagella-associated protein 263 (377 aa).

Coiled coils occupy residues 95-243 and 280-354; these read LTAD…NQEL and LRKE…SLKG.

The protein belongs to the CFAP263 family. As to quaternary structure, forms a complex with CFAP184; the interaction is required for functional activity in cilia. Interacts with HAP1 and PCM1.

The protein resides in the cytoplasm. The protein localises to the cytoskeleton. Its subcellular location is the microtubule organizing center. It is found in the centrosome. It localises to the centriolar satellite. The protein resides in the cell projection. The protein localises to the cilium. Component of centriolar satellites contributing to primary cilium formation. In complex with CFAP263, acts as a regulator of ciliary beating that connects radial spoke 3 (RS3) to the inner dynein arm (IDA) and the nexin-dynein regulatory complex (N-DRC). The complex is positioned parallel to N-DRC and forms a connection between the arch at the base of RS3, the IDA tail and N-DRC. This chain is Cilia- and flagella-associated protein 263, found in Homo sapiens (Human).